A 398-amino-acid polypeptide reads, in one-letter code: Phosphoglycerate kinase (398 aa).

Residues 23 to 25 (DLN), Arg-38, 61 to 64 (HFGR), Arg-120, and Arg-153 contribute to the substrate site. Residues Lys-203, Glu-325, and 355–358 (GGDT) each bind ATP.

It belongs to the phosphoglycerate kinase family. In terms of assembly, monomer.

The protein localises to the cytoplasm. The enzyme catalyses (2R)-3-phosphoglycerate + ATP = (2R)-3-phospho-glyceroyl phosphate + ADP. The protein operates within carbohydrate degradation; glycolysis; pyruvate from D-glyceraldehyde 3-phosphate: step 2/5. The chain is Phosphoglycerate kinase from Mesorhizobium japonicum (strain LMG 29417 / CECT 9101 / MAFF 303099) (Mesorhizobium loti (strain MAFF 303099)).